A 268-amino-acid chain; its full sequence is MLTDITLGQYYPGNSCIHRLDPRTKILAVLFYMVMVFLANSPLSYGILIGFIVLGAALAKLPAGLLLRSIKPLWIIILLTMVIHFVTDPGEALWHWKFITVTREGIVLGVKMSLRLVLLLLVSSLMTFTTSPIVLTDGIESLLRPFKKIGVPAHELAMMMTIALRFIPTLLEETDRIMKAQMSRGADFSSGNIMKRAKNMLPILIPLFISSFRRADELALAMEARCYRGGEGRTRMHELVYGKADALTGLVMLALFVLLAFLRWGIPA.

The next 6 helical transmembrane spans lie at 26-46, 47-67, 73-93, 116-136, 151-171, and 246-266; these read ILAVLFYMVMVFLANSPLSYG, ILIGFIVLGAALAKLPAGLLL, LWIIILLTMVIHFVTDPGEAL, LVLLLLVSSLMTFTTSPIVLT, VPAHELAMMMTIALRFIPTLL, and ALTGLVMLALFVLLAFLRWGI.

This sequence belongs to the energy-coupling factor EcfT family. As to quaternary structure, forms a stable energy-coupling factor (ECF) transporter complex composed of 2 membrane-embedded substrate-binding proteins (S component), 2 ATP-binding proteins (A component) and 2 transmembrane proteins (T component). May be able to interact with more than 1 S component at a time.

The protein localises to the cell membrane. Functionally, transmembrane (T) component of an energy-coupling factor (ECF) ABC-transporter complex. Unlike classic ABC transporters this ECF transporter provides the energy necessary to transport a number of different substrates. The polypeptide is Energy-coupling factor transporter transmembrane protein EcfT (Acidaminococcus fermentans (strain ATCC 25085 / DSM 20731 / CCUG 9996 / CIP 106432 / VR4)).